Consider the following 504-residue polypeptide: Cytochrome P450 2D10 (504 aa).

The residue at position 249 (serine 249) is a Phosphoserine. Cysteine 446 contacts heme.

It belongs to the cytochrome P450 family. Heme is required as a cofactor.

It localises to the endoplasmic reticulum membrane. The protein resides in the microsome membrane. The enzyme catalyses an organic molecule + reduced [NADPH--hemoprotein reductase] + O2 = an alcohol + oxidized [NADPH--hemoprotein reductase] + H2O + H(+). Functionally, cytochromes P450 are a group of heme-thiolate monooxygenases. In liver microsomes, this enzyme is involved in an NADPH-dependent electron transport pathway. It oxidizes a variety of structurally unrelated compounds, including steroids, fatty acids, and xenobiotics. The polypeptide is Cytochrome P450 2D10 (Cyp2d10) (Mus musculus (Mouse)).